Consider the following 255-residue polypeptide: Small ribosomal subunit protein eS1 (255 aa).

Over residues 1–18 the composition is skewed to basic residues; it reads MAVGKNKRLSKGKKGLKK. Residues 1 to 28 are disordered; sequence MAVGKNKRLSKGKKGLKKRTQDPFSRKD. At alanine 2 the chain carries N-acetylalanine; partial. The segment covering 19 to 28 has biased composition (basic and acidic residues); it reads RTQDPFSRKD.

This sequence belongs to the eukaryotic ribosomal protein eS1 family. As to quaternary structure, component of the small ribosomal subunit. Mature ribosomes consist of a small (40S) and a large (60S) subunit. The 40S subunit contains about 33 different proteins and 1 molecule of RNA (18S). The 60S subunit contains about 49 different proteins and 3 molecules of RNA (25S, 5.8S and 5S).

The protein resides in the cytoplasm. This chain is Small ribosomal subunit protein eS1, found in Ajellomyces dermatitidis (strain ER-3 / ATCC MYA-2586) (Blastomyces dermatitidis).